We begin with the raw amino-acid sequence, 409 residues long: Dual-specificity RNA methyltransferase RlmN (409 aa).

Glutamate 117 serves as the catalytic Proton acceptor. The Radical SAM core domain maps to 128–377; the sequence is LNGRKTLCIS…CTIRQTRGDD (250 aa). The cysteines at positions 135 and 382 are disulfide-linked. The [4Fe-4S] cluster site is built by cysteine 142, cysteine 146, and cysteine 149. S-adenosyl-L-methionine-binding positions include 205–206, serine 237, 259–261, and asparagine 339; these read GE and SLH. Catalysis depends on cysteine 382, which acts as the S-methylcysteine intermediate.

Belongs to the radical SAM superfamily. RlmN family. [4Fe-4S] cluster is required as a cofactor.

It is found in the cytoplasm. It carries out the reaction adenosine(2503) in 23S rRNA + 2 reduced [2Fe-2S]-[ferredoxin] + 2 S-adenosyl-L-methionine = 2-methyladenosine(2503) in 23S rRNA + 5'-deoxyadenosine + L-methionine + 2 oxidized [2Fe-2S]-[ferredoxin] + S-adenosyl-L-homocysteine. The catalysed reaction is adenosine(37) in tRNA + 2 reduced [2Fe-2S]-[ferredoxin] + 2 S-adenosyl-L-methionine = 2-methyladenosine(37) in tRNA + 5'-deoxyadenosine + L-methionine + 2 oxidized [2Fe-2S]-[ferredoxin] + S-adenosyl-L-homocysteine. In terms of biological role, specifically methylates position 2 of adenine 2503 in 23S rRNA and position 2 of adenine 37 in tRNAs. m2A2503 modification seems to play a crucial role in the proofreading step occurring at the peptidyl transferase center and thus would serve to optimize ribosomal fidelity. This is Dual-specificity RNA methyltransferase RlmN from Psychrobacter arcticus (strain DSM 17307 / VKM B-2377 / 273-4).